A 582-amino-acid polypeptide reads, in one-letter code: MKLNFKIKDKKTLKRLKKGGFWALGLFGAAINAFSAVLIVNEVLRLQSGETLIASGRSGNLSFQLYSKVNQNAKSKLNSISLTDGGYRSEIDLGDGSNFREDFRNFANNLSEAITDAPKDLLRPVPKVEVSGLIKTSSTFITPNFKAGYYDQVAADGKTLKYYQSTEYFNNRVVMPILQTTNGTLTANNRAYDDIFVDQGVPKFPGWFHDVDKAYYAGSNGQSEYLFKEWNYYVANGSPLYNVYPNHHFKQIKTIAFDAPRIKQGNTDGINLNLKQRNPDYVIINGLTGDGSTLKDLELPESVKKVSIYGDYHSINVAKQIFKNVLELEFYSTNQDNNFGFNPLVLGDHTNIIYDLFASKPFNYIDLTSLELKDNQDNIDASKLKRAVSDIYIRRRFERQMQGYWAGGYIDRYLVKNTNEKNVNKDNDTVYAALKDINLHLEETYTHGGNTMYRVNENYYPGASAYEAERATRDSEFQKEIVQRAELIGVVFEYGVKNLRPGLKYTVKFESPQEQVALKSTDKFQPVIGSVTDMSKSVTDLIGVLRDNAEILNITNVSKDETVVAELKEKLDRENVFQEIRT.

A helical membrane pass occupies residues 20-40 (GFWALGLFGAAINAFSAVLIV).

The protein resides in the membrane. This is an uncharacterized protein from Mycoplasma pneumoniae (strain ATCC 29342 / M129 / Subtype 1) (Mycoplasmoides pneumoniae).